The sequence spans 340 residues: 2-deoxy-scyllo-inosamine dehydrogenase (340 aa).

Zn(2+) contacts are provided by cysteine 37, histidine 59, cysteine 89, cysteine 92, cysteine 95, cysteine 103, and glutamate 144.

This sequence belongs to the zinc-containing alcohol dehydrogenase family. DOIA dehydrogenase subfamily. Zn(2+) is required as a cofactor.

It catalyses the reaction 2-deoxy-scyllo-inosamine + NADP(+) = 3-amino-2,3-dideoxy-scyllo-inosose + NADPH + H(+). The catalysed reaction is 2-deoxy-scyllo-inosamine + NAD(+) = 3-amino-2,3-dideoxy-scyllo-inosose + NADH + H(+). It participates in metabolic intermediate biosynthesis; 2-deoxystreptamine biosynthesis; 2-deoxystreptamine from D-glucose 6-phosphate: step 3/4. Its pathway is antibiotic biosynthesis; neomycin biosynthesis. Catalyzes the oxidation of 2-deoxy-scyllo-inosamine (DOIA) with NAD(+) or NADP(+), forming 3-amino-2,3-dideoxy-scyllo-inosose (amino-DOI). The sequence is that of 2-deoxy-scyllo-inosamine dehydrogenase (neoA) from Streptomyces fradiae (Streptomyces roseoflavus).